A 610-amino-acid polypeptide reads, in one-letter code: L-galactono-1,4-lactone dehydrogenase, mitochondrial (610 aa).

Residues 1 to 35 constitute a mitochondrion transit peptide; it reads MLRSLLLRRSVGHSLGTLSPSSSTIRSSFSPHRTL. Residues 17–61 form a disordered region; it reads TLSPSSSTIRSSFSPHRTLCTTGQTLTPPPPPPPRPPPPPPATAS. Residues 19–30 show a composition bias toward low complexity; that stretch reads SPSSSTIRSSFS. Residues 36 to 101 constitute a propeptide, removed in mature form; it reads CTTGQTLTPP…AKHKKAQIFR (66 aa). The span at 43 to 58 shows a compositional bias: pro residues; the sequence is TPPPPPPPRPPPPPPA. A helical membrane pass occupies residues 68–84; it reads YAGYAALAIFSGVATYF. The FAD-binding PCMH-type domain occupies 123–258; the sequence is TRNFNQPENL…TPAKGTIELS (136 aa).

It depends on FAD as a cofactor.

It is found in the mitochondrion membrane. It catalyses the reaction L-galactono-1,4-lactone + 4 Fe(III)-[cytochrome c] = L-dehydroascorbate + 4 Fe(II)-[cytochrome c] + 5 H(+). It carries out the reaction L-gulono-1,4-lactone + 2 Fe(III)-[cytochrome c] = L-ascorbate + 2 Fe(II)-[cytochrome c] + 3 H(+). The protein operates within cofactor biosynthesis; L-ascorbate biosynthesis. In terms of biological role, involved in the biosynthesis of ascorbate. Catalyzes the final step of ascorbate biosynthesis. Uses L-galactono-1,4-lactone and L-gulono-1,4-lactone as substrates, but not D-galactono-1,4-lactone, D-gulono-1,4-lactone, L-mannono-1,4-lactone or D-galactonic acid. Also active with phenazine methosulfate and 1,4-benzoquinone as electron acceptors. Involved in the regulation of the accumulation of the mitochondrial respiratory complex I. Structural part of one of the plant-specific mitochondrial complex I assembly intermediates, lacking the whole distal (PD) module. Prevents the binding of the plant specific P1 protein (CPN60/HSP60), responsible for the linkage of the proximal (PP) to the distal (PD) module. The chain is L-galactono-1,4-lactone dehydrogenase, mitochondrial from Arabidopsis thaliana (Mouse-ear cress).